The sequence spans 344 residues: Glyceraldehyde-3-phosphate dehydrogenase (344 aa).

NAD(+) is bound by residues 11 to 12 (TI) and Gly110. 139–141 (SCN) serves as a coordination point for D-glyceraldehyde 3-phosphate. Cys140 (nucleophile) is an active-site residue. Arg169 is an NAD(+) binding site. 195 to 196 (HG) is a binding site for D-glyceraldehyde 3-phosphate. Gln302 contributes to the NAD(+) binding site.

Belongs to the glyceraldehyde-3-phosphate dehydrogenase family. As to quaternary structure, homotetramer.

It localises to the cytoplasm. The catalysed reaction is D-glyceraldehyde 3-phosphate + phosphate + NADP(+) = (2R)-3-phospho-glyceroyl phosphate + NADPH + H(+). The enzyme catalyses D-glyceraldehyde 3-phosphate + phosphate + NAD(+) = (2R)-3-phospho-glyceroyl phosphate + NADH + H(+). It participates in carbohydrate degradation; glycolysis; pyruvate from D-glyceraldehyde 3-phosphate: step 1/5. This chain is Glyceraldehyde-3-phosphate dehydrogenase, found in Pyrobaculum islandicum (strain DSM 4184 / JCM 9189 / GEO3).